A 497-amino-acid polypeptide reads, in one-letter code: CRISPR-associated endodeoxyribonuclease Cas12f1 (497 aa).

The recognition domain (REC) stretch occupies residues 29–122 (RKDLSTMSRF…PTYKITTAPI (94 aa)). Residues 123-214 (RLQNNIYKLI…YCIIPYTFPT (92 aa)) form a wedge domain (WED) region. The segment at 215 to 223 (HETVLDPDK) is linker. The interval 224-374 (VMGVDLGVAK…VAINPQYTSQ (151 aa)) is ruvC-I. Catalysis depends on residues D228 and E327. A target nucleic acid-binding (TNB) region spans residues 375–432 (RCSMCGYIEKTNRSSQAVFECKQCGYGSRTICINCRHVQVSGDVCEECGGIVKKENVN). Positions 376, 379, 395, and 398 each coordinate Zn(2+). Positions 433–453 (ADYNAAKNISTPYIDQIIMEK) are ruvC-II. The active site involves D434.

Belongs to the CRISPR-associated endonuclease Cas12f family. An asymmetric homodimer. Guide RNA is probably required for dimerization. The cofactor is Mg(2+). Zn(2+) serves as cofactor.

In terms of biological role, CRISPR (clustered regularly interspaced short palindromic repeat), is an adaptive immune system that provides protection against mobile genetic elements (viruses, transposable elements and conjugative plasmids). CRISPR clusters contain sequences complementary to antecedent mobile elements and target invading nucleic acids. CRISPR clusters are transcribed and processed into CRISPR RNA (crRNA), which requires a trans-encoded small RNA (tracrRNA), but not this protein. Recognizes a short motif in the CRISPR repeat sequences (the 5' PAM or protospacer adjacent motif, TTC in this organism) to help distinguish self versus nonself, as targets within the CRISPR locus do not have PAMs. Has dsDNA endonuclease activity upon expression in E.coli of this protein, a mini CRISPR array and the probable tracrRNA. Plasmid cleavage is centered around positions 24 base pairs 3' of PAM. The mini system protects E.coli against transformation by foreign plasmids. This is CRISPR-associated endodeoxyribonuclease Cas12f1 from Syntrophomonas palmitatica (strain DSM 18709 / JCM 14374 / NBRC 102128 / MPA).